A 120-amino-acid polypeptide reads, in one-letter code: PYEKIGAELVKEVAKKTDDVAGDGTTTATVLAQALVKEGLRNVAAGANPLGLKRGIEKAVEKITQTLLSSAKDVETKEQIAATAGISAGDQSIGDLIAEAMDKVGNEGVITVEESNTFGL.

Residue 23-27 coordinates ATP; sequence DGTTT.

Belongs to the chaperonin (HSP60) family. Forms a cylinder of 14 subunits composed of two heptameric rings stacked back-to-back. Interacts with the co-chaperonin GroES.

It localises to the cytoplasm. The catalysed reaction is ATP + H2O + a folded polypeptide = ADP + phosphate + an unfolded polypeptide.. Together with its co-chaperonin GroES, plays an essential role in assisting protein folding. The GroEL-GroES system forms a nano-cage that allows encapsulation of the non-native substrate proteins and provides a physical environment optimized to promote and accelerate protein folding. In Mycobacterium gordonae, this protein is Chaperonin GroEL.